Consider the following 299-residue polypeptide: Probable lipid kinase YegS (299 aa).

In terms of domain architecture, DAGKc spans 2-133; sequence AEFPASLLIL…IDMAQVNKQT (132 aa). ATP is bound by residues threonine 40, 66–72, and threonine 95; that span reads GDGTINE. Mg(2+) contacts are provided by leucine 215, aspartate 218, and leucine 220. The active-site Proton acceptor is the glutamate 271.

This sequence belongs to the diacylglycerol/lipid kinase family. YegS lipid kinase subfamily. The cofactor is Mg(2+). It depends on Ca(2+) as a cofactor.

It localises to the cytoplasm. Functionally, probably phosphorylates lipids; the in vivo substrate is unknown. In Escherichia coli O9:H4 (strain HS), this protein is Probable lipid kinase YegS.